Consider the following 306-residue polypeptide: Methionyl-tRNA formyltransferase (306 aa).

(6S)-5,6,7,8-tetrahydrofolate is bound at residue 110 to 113 (SLLP).

Belongs to the Fmt family.

It carries out the reaction L-methionyl-tRNA(fMet) + (6R)-10-formyltetrahydrofolate = N-formyl-L-methionyl-tRNA(fMet) + (6S)-5,6,7,8-tetrahydrofolate + H(+). Its function is as follows. Attaches a formyl group to the free amino group of methionyl-tRNA(fMet). The formyl group appears to play a dual role in the initiator identity of N-formylmethionyl-tRNA by promoting its recognition by IF2 and preventing the misappropriation of this tRNA by the elongation apparatus. This is Methionyl-tRNA formyltransferase from Brucella abortus (strain S19).